Consider the following 208-residue polypeptide: Holliday junction branch migration complex subunit RuvA (208 aa).

A domain I region spans residues 1–63 (MIGMLTGRVE…QDSVTLYGFL (63 aa)). The domain II stretch occupies residues 64-142 (DRDSKRVFLQ…LNQSDDASAG (79 aa)). The interval 143–151 (NAPYQPTVD) is flexible linker. The domain III stretch occupies residues 151-208 (DAGVEQVVEGLVSLGWRQQDAQRAVNEACAENDVPMPLASDDAPRVLRLALARMDRGR).

The protein belongs to the RuvA family. In terms of assembly, homotetramer. Forms an RuvA(8)-RuvB(12)-Holliday junction (HJ) complex. HJ DNA is sandwiched between 2 RuvA tetramers; dsDNA enters through RuvA and exits via RuvB. An RuvB hexamer assembles on each DNA strand where it exits the tetramer. Each RuvB hexamer is contacted by two RuvA subunits (via domain III) on 2 adjacent RuvB subunits; this complex drives branch migration. In the full resolvosome a probable DNA-RuvA(4)-RuvB(12)-RuvC(2) complex forms which resolves the HJ.

Its subcellular location is the cytoplasm. In terms of biological role, the RuvA-RuvB-RuvC complex processes Holliday junction (HJ) DNA during genetic recombination and DNA repair, while the RuvA-RuvB complex plays an important role in the rescue of blocked DNA replication forks via replication fork reversal (RFR). RuvA specifically binds to HJ cruciform DNA, conferring on it an open structure. The RuvB hexamer acts as an ATP-dependent pump, pulling dsDNA into and through the RuvAB complex. HJ branch migration allows RuvC to scan DNA until it finds its consensus sequence, where it cleaves and resolves the cruciform DNA. The protein is Holliday junction branch migration complex subunit RuvA of Bifidobacterium longum subsp. infantis (strain ATCC 15697 / DSM 20088 / JCM 1222 / NCTC 11817 / S12).